Here is a 338-residue protein sequence, read N- to C-terminus: Eukaryotic translation initiation factor 3 subunit H (338 aa).

The 133-residue stretch at 22–154 (VQCDGLAVMK…LKAYRLTPQA (133 aa)) folds into the MPN domain.

The protein belongs to the eIF-3 subunit H family. As to quaternary structure, component of the eukaryotic translation initiation factor 3 (eIF-3) complex. The eIF-3 complex interacts with pix. Interacts with mxt.

It is found in the cytoplasm. Its function is as follows. Component of the eukaryotic translation initiation factor 3 (eIF-3) complex, which is involved in protein synthesis of a specialized repertoire of mRNAs and, together with other initiation factors, stimulates binding of mRNA and methionyl-tRNAi to the 40S ribosome. The eIF-3 complex specifically targets and initiates translation of a subset of mRNAs involved in cell proliferation. The polypeptide is Eukaryotic translation initiation factor 3 subunit H (Drosophila yakuba (Fruit fly)).